The sequence spans 332 residues: L-lactate dehydrogenase C chain (332 aa).

NAD(+) contacts are provided by residues 29–57 (GAVG…AVDK) and arginine 99. Residues arginine 106, asparagine 138, and arginine 169 each contribute to the substrate site. An NAD(+)-binding site is contributed by asparagine 138. Catalysis depends on histidine 193, which acts as the Proton acceptor. Threonine 248 is a binding site for substrate. Serine 301 is subject to Phosphoserine.

Belongs to the LDH/MDH superfamily. LDH family. Homotetramer. Interacts with RABL2/RABL2A; binds preferentially to GTP-bound RABL2.

The protein localises to the cytoplasm. The catalysed reaction is (S)-lactate + NAD(+) = pyruvate + NADH + H(+). Its pathway is fermentation; pyruvate fermentation to lactate; (S)-lactate from pyruvate: step 1/1. Possible role in sperm motility. The sequence is that of L-lactate dehydrogenase C chain (LDHC) from Sus scrofa (Pig).